Consider the following 270-residue polypeptide: Phosphatidylglycerol--prolipoprotein diacylglyceryl transferase (270 aa).

The next 4 membrane-spanning stretches (helical) occupy residues 19–39 (FPVYWYGIIIGTGVLLGLWLA), 56–76 (LVLIAVPIAILFARMYYVIFE), 92–112 (QGGLAIHGGLIGAVITGILFA), and 116–136 (GVSFWKLADIAAPSILLGQAI). An a 1,2-diacyl-sn-glycero-3-phospho-(1'-sn-glycerol)-binding site is contributed by Arg138. Helical transmembrane passes span 178–198 (HPTFLYESLWNFAGVILLLAL), 206–226 (GELFFTYLIWYSVGRFFVEGL), and 236–256 (LRIAQVMSIGLVVISIIFIIV).

This sequence belongs to the Lgt family.

The protein localises to the cell membrane. The catalysed reaction is L-cysteinyl-[prolipoprotein] + a 1,2-diacyl-sn-glycero-3-phospho-(1'-sn-glycerol) = an S-1,2-diacyl-sn-glyceryl-L-cysteinyl-[prolipoprotein] + sn-glycerol 1-phosphate + H(+). The protein operates within protein modification; lipoprotein biosynthesis (diacylglyceryl transfer). In terms of biological role, catalyzes the transfer of the diacylglyceryl group from phosphatidylglycerol to the sulfhydryl group of the N-terminal cysteine of a prolipoprotein, the first step in the formation of mature lipoproteins. In Bacillus cereus (strain Q1), this protein is Phosphatidylglycerol--prolipoprotein diacylglyceryl transferase.